A 157-amino-acid chain; its full sequence is S-ribosylhomocysteine lyase (157 aa).

3 residues coordinate Fe cation: H54, H58, and C126.

It belongs to the LuxS family. As to quaternary structure, homodimer. Requires Fe cation as cofactor.

The catalysed reaction is S-(5-deoxy-D-ribos-5-yl)-L-homocysteine = (S)-4,5-dihydroxypentane-2,3-dione + L-homocysteine. Involved in the synthesis of autoinducer 2 (AI-2) which is secreted by bacteria and is used to communicate both the cell density and the metabolic potential of the environment. The regulation of gene expression in response to changes in cell density is called quorum sensing. Catalyzes the transformation of S-ribosylhomocysteine (RHC) to homocysteine (HC) and 4,5-dihydroxy-2,3-pentadione (DPD). The protein is S-ribosylhomocysteine lyase of Bacillus cereus (strain 03BB102).